Consider the following 157-residue polypeptide: Small ribosomal subunit protein uS7 (157 aa).

The protein belongs to the universal ribosomal protein uS7 family. In terms of assembly, part of the 30S ribosomal subunit. Contacts proteins S9 and S11.

Functionally, one of the primary rRNA binding proteins, it binds directly to 16S rRNA where it nucleates assembly of the head domain of the 30S subunit. Is located at the subunit interface close to the decoding center, probably blocks exit of the E-site tRNA. In Chlamydia abortus (strain DSM 27085 / S26/3) (Chlamydophila abortus), this protein is Small ribosomal subunit protein uS7.